Reading from the N-terminus, the 238-residue chain is Opacity protein opA66 (238 aa).

Residue Ala-1 is a signal peptide. 2 disordered regions span residues 88-109 (NLQR…QENG) and 162-183 (GARG…AHQE). A compositionally biased stretch (polar residues) spans 168-183 (PTVSSPYKNTQDAHQE).

It belongs to the opacity porin family.

It localises to the cell outer membrane. Implicated in a number of adherence functions. OPA proteins are implicated in pathogenesis and are subject to phase variation. In Neisseria gonorrhoeae, this protein is Opacity protein opA66.